A 1373-amino-acid polypeptide reads, in one-letter code: DNA-directed RNA polymerase subunit beta (1373 aa).

Belongs to the RNA polymerase beta chain family. As to quaternary structure, the RNAP catalytic core consists of 2 alpha, 1 beta, 1 beta' and 1 omega subunit. When a sigma factor is associated with the core the holoenzyme is formed, which can initiate transcription.

The catalysed reaction is RNA(n) + a ribonucleoside 5'-triphosphate = RNA(n+1) + diphosphate. DNA-dependent RNA polymerase catalyzes the transcription of DNA into RNA using the four ribonucleoside triphosphates as substrates. In Rickettsia peacockii (strain Rustic), this protein is DNA-directed RNA polymerase subunit beta.